A 364-amino-acid polypeptide reads, in one-letter code: Ribosomal RNA large subunit methyltransferase F (364 aa).

The span at 1–17 shows a compositional bias: low complexity; the sequence is MPKPAIKTAAKPATSSA. Positions 1–53 are disordered; that stretch reads MPKPAIKTAAKPATSSAGKRGKPNTPKSVAKPKTAKPKTASKPKVKPGEKKRL. Residues 33-53 show a composition bias toward basic residues; sequence KTAKPKTASKPKVKPGEKKRL.

It belongs to the methyltransferase superfamily. METTL16/RlmF family.

It localises to the cytoplasm. The catalysed reaction is adenosine(1618) in 23S rRNA + S-adenosyl-L-methionine = N(6)-methyladenosine(1618) in 23S rRNA + S-adenosyl-L-homocysteine + H(+). In terms of biological role, specifically methylates the adenine in position 1618 of 23S rRNA. The sequence is that of Ribosomal RNA large subunit methyltransferase F from Shewanella sp. (strain MR-7).